A 123-amino-acid chain; its full sequence is Large ribosomal subunit protein bL12 (123 aa).

Belongs to the bacterial ribosomal protein bL12 family. As to quaternary structure, homodimer. Part of the ribosomal stalk of the 50S ribosomal subunit. Forms a multimeric L10(L12)X complex, where L10 forms an elongated spine to which 2 to 4 L12 dimers bind in a sequential fashion. Binds GTP-bound translation factors.

Its function is as follows. Forms part of the ribosomal stalk which helps the ribosome interact with GTP-bound translation factors. Is thus essential for accurate translation. This Aliarcobacter butzleri (strain RM4018) (Arcobacter butzleri) protein is Large ribosomal subunit protein bL12.